The sequence spans 239 residues: MKQKSWDIHLEEMMEAGIHFGHQVRKWNPKMAPFIFTERKSVHIINLTQTARFLSEACDLAANAASRGKQFLIVGTKYQAADLVVSAASGARCHYINQKWLGGMLTNWSTIETRLQKFRNLEKEKLAGIFERLPKKEVADSERRLSRLRKYFGGIKYMTALPDIVIIIDQRKEFTAIRECITLGIPTICLVDTDCDPNVTDIPIPANDDARASIKWISNKLTLAICEGRLNSNANCMNS.

The protein belongs to the universal ribosomal protein uS2 family.

The protein resides in the plastid. This Aneura mirabilis (Parasitic liverwort) protein is Small ribosomal subunit protein uS2c (rps2).